We begin with the raw amino-acid sequence, 495 residues long: MSSSRPASSSSSRNRQSSQARVLAQTTLDAELNAEYEESGDSFDYSKLVEAQRDGPPVQQGRSEKVIAYLQHIQKGKLIQTFGCLLALDEKSFNVIAFSENAPEMLTTVSHAVPSVDDPPRLGIGTNVRSLFSDQGATALHKALGFADVSLLNPILVQCKTSGKPFYAIVHRATGCLVVDFEPVKPTEFPATAAGALQSYKLAAKAISKIQSLPGGSMEMLCNTVVKEVFDLTGYDRVMAYKFHEDDHGEVFSEITKPGLEPYLGLHYPATDIPQAARFLFMKNKVRMICDCRARSIKVIEAEALPFDISLCGSALRAPHSCHLQYMENMNSIASLVMAVVVNENEEDDEAESEQPAQQQKKKKLWGLLVCHHESPRYVPFPLRYACEFLAQVFAVHVNREFELEKQLREKNILKMQTMLSDMLFREASPLTIVSGNPNIMDLVKCDGAALLYGGKVWRLRNAPTESQIHDIAFWLSDVHRDSTGLSTDSLHDAG.

A compositionally biased stretch (low complexity) spans 1–21 (MSSSRPASSSSSRNRQSSQAR). The segment at 1-24 (MSSSRPASSSSSRNRQSSQARVLA) is disordered. The region spanning 217 to 402 (SMEMLCNTVV…VFAVHVNREF (186 aa)) is the GAF domain. Cys-322 is a phytochromobilin binding site.

This sequence belongs to the phytochrome family. Homodimer. In terms of processing, contains one covalently linked phytochromobilin chromophore.

Functionally, regulatory photoreceptor which exists in two forms that are reversibly interconvertible by light: the Pr form that absorbs maximally in the red region of the spectrum and the Pfr form that absorbs maximally in the far-red region. Photoconversion of Pr to Pfr induces an array of morphogenic responses, whereas reconversion of Pfr to Pr cancels the induction of those responses. Pfr controls the expression of a number of nuclear genes including those encoding the small subunit of ribulose-bisphosphate carboxylase, chlorophyll A/B binding protein, protochlorophyllide reductase, rRNA, etc. It also controls the expression of its own gene(s) in a negative feedback fashion. The sequence is that of Phytochrome A type 5 (PHYA5) from Avena sativa (Oat).